A 471-amino-acid chain; its full sequence is UDP-N-acetylmuramate--L-alanine ligase (471 aa).

125 to 131 (GTHGKTT) is a binding site for ATP.

The protein belongs to the MurCDEF family.

The protein resides in the cytoplasm. The enzyme catalyses UDP-N-acetyl-alpha-D-muramate + L-alanine + ATP = UDP-N-acetyl-alpha-D-muramoyl-L-alanine + ADP + phosphate + H(+). The protein operates within cell wall biogenesis; peptidoglycan biosynthesis. Its function is as follows. Cell wall formation. The polypeptide is UDP-N-acetylmuramate--L-alanine ligase (Kineococcus radiotolerans (strain ATCC BAA-149 / DSM 14245 / SRS30216)).